The chain runs to 558 residues: NAD(P)H-quinone oxidoreductase chain 4 (558 aa).

Transmembrane regions (helical) follow at residues 25–45 (FPWL…VPFV), 56–76 (WFAL…YLTG), 90–110 (VSWL…LSMP), 111–131 (LILL…PVTF), 133–153 (PKLF…VFAV), 157–177 (LLFF…LAIW), 189–209 (FILY…AMGF), 230–250 (GFEL…LPIV), 264–284 (TAPV…YALM), 298–318 (FAPL…LTSF), 327–347 (IAYS…SFSE), 353–373 (AMLQ…LVGA), 397–417 (FALW…SGFV), 438–458 (IVID…LLSM), and 485–505 (VYII…PKLM).

The protein belongs to the complex I subunit 4 family.

The protein resides in the cellular thylakoid membrane. It catalyses the reaction a plastoquinone + NADH + (n+1) H(+)(in) = a plastoquinol + NAD(+) + n H(+)(out). The enzyme catalyses a plastoquinone + NADPH + (n+1) H(+)(in) = a plastoquinol + NADP(+) + n H(+)(out). NDH-1 shuttles electrons from NAD(P)H, via FMN and iron-sulfur (Fe-S) centers, to quinones in the respiratory chain. The immediate electron acceptor for the enzyme in this species is believed to be plastoquinone. Couples the redox reaction to proton translocation (for every two electrons transferred, four hydrogen ions are translocated across the cytoplasmic membrane), and thus conserves the redox energy in a proton gradient. This Synechococcus sp. (strain CC9311) protein is NAD(P)H-quinone oxidoreductase chain 4.